Here is a 613-residue protein sequence, read N- to C-terminus: Proline--tRNA ligase (613 aa).

The protein belongs to the class-II aminoacyl-tRNA synthetase family. ProS type 1 subfamily. As to quaternary structure, homodimer.

The protein resides in the cytoplasm. It catalyses the reaction tRNA(Pro) + L-proline + ATP = L-prolyl-tRNA(Pro) + AMP + diphosphate. In terms of biological role, catalyzes the attachment of proline to tRNA(Pro) in a two-step reaction: proline is first activated by ATP to form Pro-AMP and then transferred to the acceptor end of tRNA(Pro). As ProRS can inadvertently accommodate and process non-cognate amino acids such as alanine and cysteine, to avoid such errors it has two additional distinct editing activities against alanine. One activity is designated as 'pretransfer' editing and involves the tRNA(Pro)-independent hydrolysis of activated Ala-AMP. The other activity is designated 'posttransfer' editing and involves deacylation of mischarged Ala-tRNA(Pro). The misacylated Cys-tRNA(Pro) is not edited by ProRS. This chain is Proline--tRNA ligase, found in Cyanothece sp. (strain PCC 7425 / ATCC 29141).